We begin with the raw amino-acid sequence, 381 residues long: Acetyl-CoA:oxalate CoA-transferase (381 aa).

Histidine 233 is an active-site residue.

Belongs to the CoA-transferase III family. As to quaternary structure, homodimer.

It carries out the reaction oxalate + acetyl-CoA = oxalyl-CoA + acetate. Its function is as follows. Involved in the catabolism of oxalate and in the adapatation to low pH. ACOCT serves to prime the oxalate-induced acid tolerance response (ATR) cycle by producing substrate for oxalyl-CoA decarboxylase (OXC) and formyl-coenzyme A transferase (FCOCT). Catalyzes the reversible conversion of acetyl-CoA and oxalate to oxalyl-CoA and acetate. It can also use formyl-CoA and oxalate to produce oxalyl-CoA and formate with significantly reduced specific activity. This Escherichia coli (strain K12) protein is Acetyl-CoA:oxalate CoA-transferase (yfdE).